A 348-amino-acid chain; its full sequence is MGPRARPALFFLILLRTVAAQGRPPRSHSLRYLFMGASERDHGLPLFEALGYVDDELFVAYNHESRRAESRAQWVLGEAHSQLWLQLSQSLKGWDHMFIVDFWTIMDNHNHSKESHTLQVILGCEVQEDNSTRGFWKYGYDGQDHLEFCPETLDWRAAESRALTTKLEWEVNKIRAKQNRAYLERDCPEQLQWLLELGRGVLDQQVPPLVKVTHHVASAVTTLRCQALNFYPQNITMRWLKDRKPMDVKDAESKDVLPSGDGTYQSWEALAVPPGEEQRYTCQVEHPGLDQPLTATWEPSLSNTLVTGVISGIAVCVIIFFIGILFRILRKRQASRGAMGDYVLGECE.

Positions 1–22 are cleaved as a signal peptide; it reads MGPRARPALFFLILLRTVAAQG. Positions 23-114 are alpha-1; the sequence is RPPRSHSLRY…IMDNHNHSKE (92 aa). Over 23-306 the chain is Extracellular; it reads RPPRSHSLRY…WEPSLSNTLV (284 aa). N-linked (GlcNAc...) asparagine glycans are attached at residues asparagine 110, asparagine 130, and asparagine 234. Positions 115-205 are alpha-2; the sequence is SHTLQVILGC…ELGRGVLDQQ (91 aa). Disulfide bonds link cysteine 124-cysteine 187 and cysteine 225-cysteine 282. The tract at residues 206 to 297 is alpha-3; it reads VPPLVKVTHH…GLDQPLTATW (92 aa). In terms of domain architecture, Ig-like C1-type spans 207–296; that stretch reads PPLVKVTHHV…PGLDQPLTAT (90 aa). The connecting peptide stretch occupies residues 298–306; that stretch reads EPSLSNTLV. The chain crosses the membrane as a helical span at residues 307 to 330; it reads TGVISGIAVCVIIFFIGILFRILR. Residues 331–348 are Cytoplasmic-facing; that stretch reads KRQASRGAMGDYVLGECE.

This sequence belongs to the MHC class I family. Binds TFR through the extracellular domain in a pH-dependent manner.

It localises to the cell membrane. In terms of biological role, binds to transferrin receptor (TFR) and reduces its affinity for iron-loaded transferrin. The polypeptide is Hereditary hemochromatosis protein homolog (HFE) (Ceratotherium simum (White rhinoceros)).